A 1341-amino-acid polypeptide reads, in one-letter code: WASH complex subunit 2A (1341 aa).

Residues 1-220 (MMNRTTPDQE…VGSDRGSIVD (220 aa)) form a sufficient for interaction with WASHC3, WASHC4 and WASHC5; required for interaction with WASHC1 region. Residues 202–214 (GELSSEEGSVGSD) show a composition bias toward low complexity. The disordered stretch occupies residues 202–405 (GELSSEEGSV…SSSKPGKKIP (204 aa)). The span at 220-232 (DTEEEKEEEESDE) shows a compositional bias: acidic residues. Basic and acidic residues predominate over residues 233–244 (DFAHHSDNEQNR). 2 stretches are compositionally biased toward acidic residues: residues 250–259 (SDEEEDDDGC) and 266–276 (EKEEEDIEDIE). A compositionally biased stretch (basic and acidic residues) spans 293 to 307 (LAARIKGDAVGRVDE). Gly residues predominate over residues 355-366 (GSGGGLFSGGKG). Positions 356–600 (SGGGLFSGGK…QTLCLQAQRE (245 aa)) are sufficient for interaction with CCDC93. The required for interaction with CCDC22 and VPS35L stretch occupies residues 356–742 (SGGGLFSGGK…KEAQLGVKSV (387 aa)). Positions 357–1341 (GGGLFSGGKG…DDPLNAFGGQ (985 aa)) are interaction with VPS35. 4 short sequence motifs (LFa) span residues 367-378 (LFDDEDEESDLF), 411-419 (VFLGDTDVF), 450-463 (LFDDDDGDDDDDFF), and 482-491 (IFGDEEGDLF). Residues 422–554 (ASVPSMKEPQ…EDLFSSQSAS (133 aa)) form a disordered region. Positions 451-462 (FDDDDGDDDDDF) are enriched in acidic residues. A compositionally biased stretch (basic and acidic residues) spans 507–517 (DENKARAEKKV). Over residues 518 to 536 (TLSSSKNLKPSSETKTQKG) the composition is skewed to polar residues. Short sequence motifs (LFa) lie at residues 537-548 (LFSDEEDSEDLF), 572-583 (LFDDEDEEDNLF), and 617-629 (LFSSDEEDQWNIP). Ser539 carries the phosphoserine modification. Disordered regions lie at residues 621–664 (DEED…KTSL), 696–739 (DSGG…QLGV), and 751–838 (ESLK…KSTG). Residues 637–647 (SDSRSKGEPRD) are compositionally biased toward basic and acidic residues. 3 consecutive short sequence motifs (LFa) follow at residues 664–674 (LFEEDEEDDLF), 690–702 (LFEDDVDSGGSLF), and 726–738 (LFSDEEEKEAQLG). The span at 751-768 (ESLKFGRTDVAESEKEGL) shows a compositional bias: basic and acidic residues. The LFa 11 signature appears at 803–817 (LFDEEEDKMEDQNII). Over residues 823 to 834 (EVGKGRDPDAHP) the composition is skewed to basic and acidic residues. 3 short sequence motifs (LFa) span residues 839-847 (VFQDEELLF), 856-862 (DPDVDLF), and 878-888 (LFGDDEDDDLF). 2 disordered regions span residues 881–951 (DDED…KEPS) and 988–1205 (FPSS…LEDE). Composition is skewed to basic and acidic residues over residues 898–911 (QEKKRVVKKDHSVD) and 917–931 (KHPESIQGSKEKGIW). An interaction with phospholipids region spans residues 937–1341 (QDSSGLAPFK…DDPLNAFGGQ (405 aa)). Over residues 1028 to 1046 (NKSRVKMRGKRRPQTRAAR) the composition is skewed to basic residues. Positions 1029–1047 (KSRVKMRGKRRPQTRAARR) are required for interaction with F-actin-capping protein subunit alpha (CAPZA1 or CAPZA2 or CAPZA3). A phosphoserine mark is found at Ser1054 and Ser1087. Residues 1094-1110 (EALAAAAAPWEGGPVPG) are compositionally biased toward low complexity. Ser1114 is modified (phosphoserine). Short sequence motifs (LFa) lie at residues 1129 to 1136 (LFDSGDIF), 1171 to 1185 (MFPALGEASSDDDLF), 1201 to 1209 (LLEDEDDLF), 1234 to 1240 (IFEDDIF), 1262 to 1270 (LFDDNIDIF), and 1290 to 1299 (IFDDDMDDIF). The span at 1135-1145 (IFSTGTGSQSV) shows a compositional bias: polar residues. Positions 1302 to 1326 (GIQAKTTKPKSRSAQAAPEPRFEHK) are disordered. The LFa 21 signature appears at 1330–1338 (IFDDPLNAF).

The protein belongs to the FAM21 family. Component of the WASH core complex also described as WASH regulatory complex (SHRC) composed of WASH (WASHC1, WASH2P or WASH3P), WASHC2 (WASHC2A or WASHC2C), WASHC3, WASHC4 and WASHC5; in the complex interacts (via N-terminus) directly with WASHC1. The WASH core complex associates with the F-actin-capping protein dimer (formed by CAPZA1, CAPZA2 or CAPZA3 and CAPZB) in a transient or substoichiometric manner which was initially described as WASH complex. Interacts with VPS35; mediates the association with the retromer CSC complex. Interacts with FKBP15. Interacts with CCDC93, CCDC22, VPS35L; indicative for an association of the WASH core complex with the CCC and retriever complexes. Directly interacts with TBC1D23.

The protein localises to the early endosome membrane. The protein resides in the cell membrane. Acts at least in part as component of the WASH core complex whose assembly at the surface of endosomes inhibits WASH nucleation-promoting factor (NPF) activity in recruiting and activating the Arp2/3 complex to induce actin polymerization and is involved in the fission of tubules that serve as transport intermediates during endosome sorting. Mediates the recruitment of the WASH core complex to endosome membranes via binding to phospholipids and VPS35 of the retromer CSC. Mediates the recruitment of the F-actin-capping protein dimer to the WASH core complex probably promoting localized F-actin polymerization needed for vesicle scission. Via its C-terminus binds various phospholipids, most strongly phosphatidylinositol 4-phosphate (PtdIns-(4)P), phosphatidylinositol 5-phosphate (PtdIns-(5)P) and phosphatidylinositol 3,5-bisphosphate (PtdIns-(3,5)P2). Involved in the endosome-to-plasma membrane trafficking and recycling of SNX27-retromer-dependent cargo proteins, such as GLUT1. Required for the association of DNAJC13, ENTR1, ANKRD50 with retromer CSC subunit VPS35. Required for the endosomal recruitment of CCC complex subunits COMMD1 and CCDC93 as well as the retriever complex subunit VPS35L. The polypeptide is WASH complex subunit 2A (Homo sapiens (Human)).